The primary structure comprises 682 residues: TBC1 domain family member 23 (682 aa).

Residues 29 to 210 (PVPCDLRTKV…AIWDNYLQQA (182 aa)) enclose the Rab-GAP TBC domain. One can recognise a Rhodanese domain in the interval 318-426 (DGVRFFVVDC…GFMALQQHLA (109 aa)).

The protein resides in the golgi apparatus. It is found in the trans-Golgi network. It localises to the cytoplasmic vesicle. Functionally, putative Rab GTPase-activating protein which plays a role in vesicular trafficking. Involved in endosome-to-Golgi trafficking. Acts as a bridging protein by binding simultaneously to golgins, located at the trans-Golgi, and to the WASH complex, located on endosome-derived vesicles. Plays a role in brain development. May act as a general inhibitor of innate immunity signaling. This Xenopus laevis (African clawed frog) protein is TBC1 domain family member 23 (tbc1d23).